The sequence spans 70 residues: DNA-directed RNA polymerase subunit omega (70 aa).

The protein belongs to the RNA polymerase subunit omega family. The RNAP catalytic core consists of 2 alpha, 1 beta, 1 beta' and 1 omega subunit. When a sigma factor is associated with the core the holoenzyme is formed, which can initiate transcription.

The enzyme catalyses RNA(n) + a ribonucleoside 5'-triphosphate = RNA(n+1) + diphosphate. In terms of biological role, promotes RNA polymerase assembly. Latches the N- and C-terminal regions of the beta' subunit thereby facilitating its interaction with the beta and alpha subunits. This is DNA-directed RNA polymerase subunit omega from Bacillus cereus (strain G9842).